We begin with the raw amino-acid sequence, 197 residues long: Adrenodoxin-like protein 2, mitochondrial (197 aa).

The N-terminal 74 residues, 1-74 (MVFHRLSRLG…TSFSTTSEKG (74 aa)), are a transit peptide targeting the mitochondrion. The 104-residue stretch at 81–184 (INVTFVDKDG…GVRLAIPSAT (104 aa)) folds into the 2Fe-2S ferredoxin-type domain. Positions 118, 124, 127, and 165 each coordinate [2Fe-2S] cluster.

Belongs to the adrenodoxin/putidaredoxin family. The cofactor is [2Fe-2S] cluster.

The protein localises to the mitochondrion. Associates with the adrenodoxin reductase MFDR to form an efficient low potential electron transfer chain that is able to reduce cytochrome C. In Arabidopsis thaliana (Mouse-ear cress), this protein is Adrenodoxin-like protein 2, mitochondrial.